A 393-amino-acid polypeptide reads, in one-letter code: MDAATLTYDTLRFAEFEDFPETSEPVWILGRKYSIFTEKDEILSDVASRLWFTYRRNFPAIGGTGPTSDTGWGCMLRCGQMIFAQALVCRHLGRDWRWTQRKRQPDSYFNVLNAFLDRKDSYYSIHQIAQMGVGEGKSIGQWYGPNTVAQVLKKLAVFDTWSSLAVHIAMDNTVVMEEIRRLCRANLPCAGAAALPTDSERHCNGFPAGAEVTNRPSAWRPLVLLIPLRLGLTDINEAYVETLKHCFMMPQSLGVIGGKPNSAHYFIGYVGEELIYLDPHTTQPAVELTDSCFIPDESFHCQHPPSRMGIGELDPSIAVGFFCKTEEDFNDWCQQVKKLSQLGGALPMFELVEQQPSHLACQDVLNLSLDSSDVERLERFFDSEDEDFEILSL.

At Met1 the chain carries N-acetylmethionine. The residue at position 34 (Ser34) is a Phosphoserine. Cys74 functions as the Nucleophile in the catalytic mechanism. Cys189 carries the S-nitrosocysteine modification. Active-site residues include Asp278 and His280. Cys292 and Cys301 each carry S-nitrosocysteine. A disulfide bridge links Cys292 with Cys361. A phosphoserine mark is found at Ser316 and Ser383. The LIR signature appears at 388 to 391 (FEIL). Residue Ser392 is modified to Phosphoserine.

It belongs to the peptidase C54 family. In terms of assembly, interacts with PFKP; promoting phosphorylation of ATG4B at Ser-34. Interacts with GBP7. Phosphorylation at Ser-383 and Ser-392 promotes autophagy by increasing protein delipidation activity without affecting proteolytic activation of ATG8 proteins. Phosphorylation at Ser-316 by ULK1 inhibits autophagy by decreasing both proteolytic activation and delipidation activities. Phosphorylation at Ser-316 is dephosphorylated by protein phosphatase 2A (PP2A). Phosphorylation at Ser-34 by AKT2 promotes its hydrolase activity, leading to increased proteolytic activation and delipidation of ATG8 family proteins. Phosphorylation at Ser-34 by AKT1 promotes mitochondrial localization and inhibition of the F1F0-ATP synthase activity, leading to elevation of mitochondrial reactive oxygen species (ROS). Post-translationally, ubiquitinated by RNF5, leading to its degradation by the proteasome. In terms of processing, S-nitrosylation at Cys-189 and Cys-292 in response to high glucose decreases both proteolytic activation and delipidation activities. O-glycosylated by OGT, leading to increase protease activity, thereby promoting the proteolytic activation of ATG8 family proteins. Post-translationally, forms reversible intrachain disulfide bonds in response to oxidative stress. Forms interchain disulfide bonds, leading to formation of homooligomers in response to oxidation.

The protein resides in the cytoplasm. It localises to the cytosol. Its subcellular location is the cytoplasmic vesicle. The protein localises to the autophagosome. It is found in the endoplasmic reticulum. The protein resides in the mitochondrion. The enzyme catalyses [protein]-C-terminal L-amino acid-glycyl-phosphatidylethanolamide + H2O = [protein]-C-terminal L-amino acid-glycine + a 1,2-diacyl-sn-glycero-3-phosphoethanolamine. It carries out the reaction [protein]-C-terminal L-amino acid-glycyl-phosphatidylserine + H2O = [protein]-C-terminal L-amino acid-glycine + a 1,2-diacyl-sn-glycero-3-phospho-L-serine. With respect to regulation, inhibited by N-ethylmaleimide. Redox-regulated during autophagy since reducing conditions activate ATG4A whereas an oxidizing environment such as the presence of H(2)O(2) inhibits its activity. The cysteine protease activity compounds is inhibited by styrylquinoline compounds 4-28 and LV-320. Its function is as follows. Cysteine protease that plays a key role in autophagy by mediating both proteolytic activation and delipidation of ATG8 family proteins. Required for canonical autophagy (macroautophagy), non-canonical autophagy as well as for mitophagy. The protease activity is required for proteolytic activation of ATG8 family proteins: cleaves the C-terminal amino acid of ATG8 proteins MAP1LC3A, MAP1LC3B, MAP1LC3C, GABARAPL1, GABARAPL2 and GABARAP, to reveal a C-terminal glycine. Exposure of the glycine at the C-terminus is essential for ATG8 proteins conjugation to phosphatidylethanolamine (PE) and insertion to membranes, which is necessary for autophagy. Protease activity is also required to counteract formation of high-molecular weight conjugates of ATG8 proteins (ATG8ylation): acts as a deubiquitinating-like enzyme that removes ATG8 conjugated to other proteins, such as ATG3. In addition to the protease activity, also mediates delipidation of ATG8 family proteins. Catalyzes delipidation of PE-conjugated forms of ATG8 proteins during macroautophagy. Also involved in non-canonical autophagy, a parallel pathway involving conjugation of ATG8 proteins to single membranes at endolysosomal compartments, by catalyzing delipidation of ATG8 proteins conjugated to phosphatidylserine (PS). Compared to other members of the family (ATG4A, ATG4C or ATG4C), constitutes the major protein for proteolytic activation of ATG8 proteins, while it displays weaker delipidation activity than other ATG4 paralogs. Involved in phagophore growth during mitophagy independently of its protease activity and of ATG8 proteins: acts by regulating ATG9A trafficking to mitochondria and promoting phagophore-endoplasmic reticulum contacts during the lipid transfer phase of mitophagy. This Mus musculus (Mouse) protein is Cysteine protease ATG4B.